The primary structure comprises 327 residues: Transaldolase (327 aa).

Lys132 (schiff-base intermediate with substrate) is an active-site residue.

It belongs to the transaldolase family. Type 1 subfamily. Homodimer.

Its subcellular location is the cytoplasm. It catalyses the reaction D-sedoheptulose 7-phosphate + D-glyceraldehyde 3-phosphate = D-erythrose 4-phosphate + beta-D-fructose 6-phosphate. It functions in the pathway carbohydrate degradation; pentose phosphate pathway; D-glyceraldehyde 3-phosphate and beta-D-fructose 6-phosphate from D-ribose 5-phosphate and D-xylulose 5-phosphate (non-oxidative stage): step 2/3. Transaldolase is important for the balance of metabolites in the pentose-phosphate pathway. This is Transaldolase from Chlamydia caviae (strain ATCC VR-813 / DSM 19441 / 03DC25 / GPIC) (Chlamydophila caviae).